Here is a 493-residue protein sequence, read N- to C-terminus: Leucine-rich repeat-containing protein 14 (493 aa).

An LRR 1; degenerate repeat occupies 111–146 (KHALRVLDMTGLLDDGVEQDPETMSMWDCTAAVART). The stretch at 194 to 218 (RLCCRDLRAEDLPMRNTVALLQLLD) is one LRR 2; degenerate repeat. An LRR 3; degenerate repeat occupies 219–246 (AGCLRRIDLRFNNLGLRGLSVIIPHVAR). One copy of the LRR 4; degenerate repeat lies at 247–282 (FQHLASLRLHYVHGDSRQPSVDGEDNFRYFLAQMGR). 5 LRR repeats span residues 283–307 (FMCLRELSMGSSLLSGRLDQLLSTL), 308–339 (QRPLESLELAFCALLPEDLRFLAQSSHAAHLK), 340–360 (KLDLSGNDLSGNQLTPFQGLL), 364–391 (ATTLLHLELTECQLADAQLLATLPTLTR), and 392–416 (CASLRYLGLYGNPLSMAGLKELLRD).

It belongs to the PRAME family. LRRC14 subfamily. As to quaternary structure, interacts with IKBKB; disrupts IKBKB-IKBKG interaction preventing I-kappa-B-kinase (IKK) core complex formation and leading to a decrease of IKBKB phosphorylation and NF-kappaB activation. Interacts with CHUK.

It localises to the cytoplasm. Its function is as follows. Negatively regulates Toll-like receptor-mediated NF-kappa-B signaling by disrupting IKK core complex formation through interaction with IKBKB. This is Leucine-rich repeat-containing protein 14 from Mus musculus (Mouse).